Here is a 415-residue protein sequence, read N- to C-terminus: Gamma-glutamyl phosphate reductase (415 aa).

The protein belongs to the gamma-glutamyl phosphate reductase family.

The protein resides in the cytoplasm. The catalysed reaction is L-glutamate 5-semialdehyde + phosphate + NADP(+) = L-glutamyl 5-phosphate + NADPH + H(+). Its pathway is amino-acid biosynthesis; L-proline biosynthesis; L-glutamate 5-semialdehyde from L-glutamate: step 2/2. Functionally, catalyzes the NADPH-dependent reduction of L-glutamate 5-phosphate into L-glutamate 5-semialdehyde and phosphate. The product spontaneously undergoes cyclization to form 1-pyrroline-5-carboxylate. The protein is Gamma-glutamyl phosphate reductase of Bacillus cereus (strain 03BB102).